Reading from the N-terminus, the 295-residue chain is Small ribosomal subunit protein uS2 (295 aa).

An N-acetylserine modification is found at Ser2. A Phosphoserine modification is found at Ser43. Lys52 carries the N6-acetyllysine modification. The interaction with PPP1R16B stretch occupies residues 54–113 (TWEKLLLAARAIVAIENPADVSVISSRNTGQRAVLKFAAATGATPIAGRFTPGTFTNQIQ). Lys89 bears the N6-acetyllysine; alternate mark. Residue Lys89 forms a Glycyl lysine isopeptide (Lys-Gly) (interchain with G-Cter in SUMO2); alternate linkage. A Phosphothreonine modification is found at Thr97. 2 laminin-binding regions span residues 161-180 (IPCN…MLAR) and 205-229 (RDPE…EFQG). Residues 214–227 (EQAAAEKAVTKEEF) show a composition bias toward basic and acidic residues. A disordered region spans residues 214–240 (EQAAAEKAVTKEEFQGEWTAPAPEFTA). [DE]-W-[ST] repeat units lie at residues 230-232 (EWT), 247-249 (DWS), 266-268 (DWS), and 275-277 (DWS). The laminin-binding stretch occupies residues 242–295 (QPEVADWSEGVQVPSVPIQQFPTEDWSARPFTEDWSAAPTAQATEWVGTTSELS). The segment at 263 to 295 (PTEDWSARPFTEDWSAAPTAQATEWVGTTSELS) is disordered. Polar residues predominate over residues 280 to 295 (PTAQATEWVGTTSELS).

This sequence belongs to the universal ribosomal protein uS2 family. Monomer (37LRP) and homodimer (67LR). Component of the small ribosomal subunit. Mature ribosomes consist of a small (40S) and a large (60S) subunit. The 40S subunit contains about 33 different proteins and 1 molecule of RNA (18S). The 60S subunit contains about 49 different proteins and 3 molecules of RNA (28S, 5.8S and 5S). Interacts with RPS21. Interacts with several laminins including at least LAMB1. Interacts with MDK. The mature dimeric form interacts with PPP1R16B (via its fourth ankyrin repeat). Interacts with PPP1CA only in the presence of PPP1R16B. Acylated. Acylation may be a prerequisite for conversion of the monomeric 37 kDa laminin receptor precursor (37LRP) to the mature dimeric 67 kDa laminin receptor (67LR), and may provide a mechanism for membrane association. Post-translationally, cleaved by stromelysin-3 (ST3) at the cell surface. Cleavage by stromelysin-3 may be a mechanism to alter cell-extracellular matrix interactions.

It localises to the cell membrane. It is found in the cytoplasm. The protein localises to the nucleus. Its function is as follows. Required for the assembly and/or stability of the 40S ribosomal subunit. Required for the processing of the 20S rRNA-precursor to mature 18S rRNA in a late step of the maturation of 40S ribosomal subunits. Also functions as a cell surface receptor for laminin. Plays a role in cell adhesion to the basement membrane and in the consequent activation of signaling transduction pathways. May play a role in cell fate determination and tissue morphogenesis. Also acts as a receptor for several other ligands, including the pathogenic prion protein, viruses, and bacteria. Acts as a PPP1R16B-dependent substrate of PPP1CA. The sequence is that of Small ribosomal subunit protein uS2 from Ovis aries (Sheep).